A 414-amino-acid chain; its full sequence is GLABROUS1 enhancer-binding protein-like 3 (414 aa).

Disordered stretches follow at residues 36–57 and 167–191; these read QLRT…LSSS and QAKD…DRDV. Residues 38 to 50 show a composition bias toward low complexity; it reads RTTTTRTTTTRTT. Positions 382–403 are non-canonical leucine-zipper; that stretch reads LINEWKALFVDEQRLCVKKLTF.

Belongs to the GeBP family. As to quaternary structure, homo- and heterodimers. Interacts with GEBP, GPL1 and GPL2. Interacts with GEBP. In terms of tissue distribution, expressed in the apical meristem and young leaf primordia. Detected in the vascular tissues of rosette leaves, in primary and secondary roots and at the base of flowers and siliques.

It localises to the nucleus. Probable transcription factor. Involved in stress responses. Plays a repressive role in cell expansion by counteracting the positive role of CPR5 in this process, but does not regulate cell proliferation or endoreduplication. The polypeptide is GLABROUS1 enhancer-binding protein-like 3 (Arabidopsis thaliana (Mouse-ear cress)).